Here is a 75-residue protein sequence, read N- to C-terminus: Dermaseptin-SP4 (75 aa).

The N-terminal stretch at 1–22 (MAFLKKSLFLVLFLGLVSLSMC) is a signal peptide. The propeptide occupies 23–45 (EEEKRENEVEEEQEDDEQSELRR). Proline 72 is subject to Proline amide. Residues 74–75 (EQ) constitute a propeptide that is removed on maturation.

This sequence belongs to the frog skin active peptide (FSAP) family. Dermaseptin subfamily. Expressed by the skin glands.

It is found in the secreted. Its subcellular location is the target cell membrane. In terms of biological role, antimicrobial peptide with activity against Gram-positive and Gram-negative bacteria and fungi. Has been tested against E.coli (MIC=47.25-128 uM), S.aureus (MIC=189-512 uM), K.pneumoniae (MIC=189 uM) and C.albicans (MIC&gt;189 uM). Probably acts by disturbing membrane functions with its alpha-helical amphipathic structure. May penetrate bacterial membranes, but stay at the mammalian membrane surface. Shows a weak hemolytic activity. In Agalychnis spurrelli (Gliding leaf frog), this protein is Dermaseptin-SP4.